A 311-amino-acid chain; its full sequence is Methionyl-tRNA formyltransferase (311 aa).

110–113 provides a ligand contact to (6S)-5,6,7,8-tetrahydrofolate; it reads SLLP.

Belongs to the Fmt family.

The catalysed reaction is L-methionyl-tRNA(fMet) + (6R)-10-formyltetrahydrofolate = N-formyl-L-methionyl-tRNA(fMet) + (6S)-5,6,7,8-tetrahydrofolate + H(+). In terms of biological role, attaches a formyl group to the free amino group of methionyl-tRNA(fMet). The formyl group appears to play a dual role in the initiator identity of N-formylmethionyl-tRNA by promoting its recognition by IF2 and preventing the misappropriation of this tRNA by the elongation apparatus. This Streptococcus thermophilus (strain ATCC BAA-250 / LMG 18311) protein is Methionyl-tRNA formyltransferase.